The chain runs to 121 residues: Large ribosomal subunit protein bL12 (121 aa).

The protein belongs to the bacterial ribosomal protein bL12 family. As to quaternary structure, homodimer. Part of the ribosomal stalk of the 50S ribosomal subunit. Forms a multimeric L10(L12)X complex, where L10 forms an elongated spine to which 2 to 4 L12 dimers bind in a sequential fashion. Binds GTP-bound translation factors.

Its function is as follows. Forms part of the ribosomal stalk which helps the ribosome interact with GTP-bound translation factors. Is thus essential for accurate translation. This Macrococcus caseolyticus (strain JCSC5402) (Macrococcoides caseolyticum) protein is Large ribosomal subunit protein bL12.